A 210-amino-acid chain; its full sequence is Natriuretic peptide BM026 (210 aa).

The first 26 residues, 1–26 (MVGPSRLAGGGLLLLLLALLPVALDG), serve as a signal peptide directing secretion. Positions 83 to 99 (CFGHKIDRISHSSGMGC) are natriuretic peptide domain 1. C83 and C99 are oxidised to a cystine. The span at 122 to 134 (ESKKSRAARDRMV) shows a compositional bias: basic and acidic residues. The tract at residues 122-210 (ESKKSRAARD…QFNSKSSQVA (89 aa)) is disordered. Residues 140–150 (AGGGGGGGGGD) show a composition bias toward gly residues. Over residues 156–176 (ELAKKDQHNNCFGRRIDRISH) the composition is skewed to basic and acidic residues. Residues 166-182 (CFGRRIDRISHSTDLGC) are natriuretic peptide domain 2. C166 and C182 are oxidised to a cystine. Residues 201–210 (QFNSKSSQVA) are compositionally biased toward polar residues.

This sequence belongs to the natriuretic peptide family. In terms of tissue distribution, expressed by the venom gland.

The protein localises to the secreted. Its function is as follows. Natriuretic peptide that dose-dependently induces the rapid relaxation of rat aortic strips phenylephrine-precontracted. Acts by stimulating cGMP production in a dose-dependent manner (by probably activating NPR1 and/or NPR2). May also show potent hypotensive effects. The chain is Natriuretic peptide BM026 from Bungarus multicinctus (Many-banded krait).